The following is a 266-amino-acid chain: Putative pyruvate, phosphate dikinase regulatory protein (266 aa).

149–156 contributes to the ADP binding site; that stretch reads GVSRTSKT.

Belongs to the pyruvate, phosphate/water dikinase regulatory protein family. PDRP subfamily.

It catalyses the reaction N(tele)-phospho-L-histidyl/L-threonyl-[pyruvate, phosphate dikinase] + ADP = N(tele)-phospho-L-histidyl/O-phospho-L-threonyl-[pyruvate, phosphate dikinase] + AMP + H(+). The catalysed reaction is N(tele)-phospho-L-histidyl/O-phospho-L-threonyl-[pyruvate, phosphate dikinase] + phosphate + H(+) = N(tele)-phospho-L-histidyl/L-threonyl-[pyruvate, phosphate dikinase] + diphosphate. Functionally, bifunctional serine/threonine kinase and phosphorylase involved in the regulation of the pyruvate, phosphate dikinase (PPDK) by catalyzing its phosphorylation/dephosphorylation. The chain is Putative pyruvate, phosphate dikinase regulatory protein from Geobacillus sp. (strain WCH70).